Reading from the N-terminus, the 224-residue chain is Deoxyribose-phosphate aldolase (224 aa).

Asp-93 (proton donor/acceptor) is an active-site residue. Lys-159 (schiff-base intermediate with acetaldehyde) is an active-site residue. Lys-189 functions as the Proton donor/acceptor in the catalytic mechanism.

This sequence belongs to the DeoC/FbaB aldolase family. DeoC type 1 subfamily.

It localises to the cytoplasm. It carries out the reaction 2-deoxy-D-ribose 5-phosphate = D-glyceraldehyde 3-phosphate + acetaldehyde. The protein operates within carbohydrate degradation; 2-deoxy-D-ribose 1-phosphate degradation; D-glyceraldehyde 3-phosphate and acetaldehyde from 2-deoxy-alpha-D-ribose 1-phosphate: step 2/2. Functionally, catalyzes a reversible aldol reaction between acetaldehyde and D-glyceraldehyde 3-phosphate to generate 2-deoxy-D-ribose 5-phosphate. In Mycobacterium bovis (strain ATCC BAA-935 / AF2122/97), this protein is Deoxyribose-phosphate aldolase.